The chain runs to 136 residues: Aspartate 1-decarboxylase (136 aa).

Ser25 acts as the Schiff-base intermediate with substrate; via pyruvic acid in catalysis. Ser25 carries the post-translational modification Pyruvic acid (Ser). Thr57 serves as a coordination point for substrate. The active-site Proton donor is Tyr58. 73–75 (GAA) is a binding site for substrate.

The protein belongs to the PanD family. In terms of assembly, heterooctamer of four alpha and four beta subunits. Pyruvate serves as cofactor. In terms of processing, is synthesized initially as an inactive proenzyme, which is activated by self-cleavage at a specific serine bond to produce a beta-subunit with a hydroxyl group at its C-terminus and an alpha-subunit with a pyruvoyl group at its N-terminus.

Its subcellular location is the cytoplasm. The enzyme catalyses L-aspartate + H(+) = beta-alanine + CO2. It functions in the pathway cofactor biosynthesis; (R)-pantothenate biosynthesis; beta-alanine from L-aspartate: step 1/1. Catalyzes the pyruvoyl-dependent decarboxylation of aspartate to produce beta-alanine. This is Aspartate 1-decarboxylase from Acidothermus cellulolyticus (strain ATCC 43068 / DSM 8971 / 11B).